The sequence spans 256 residues: Pimeloyl-[acyl-carrier protein] methyl ester esterase (256 aa).

The AB hydrolase-1 domain occupies 15 to 242; the sequence is HLVLLHGWGL…AAHAPFISHP (228 aa). Substrate contacts are provided by residues W22, 82-83, and 143-147; these read SL and FLALQ. S82 serves as the catalytic Nucleophile. Catalysis depends on residues D207 and H235. H235 serves as a coordination point for substrate.

It belongs to the AB hydrolase superfamily. Carboxylesterase BioH family. As to quaternary structure, monomer.

The protein resides in the cytoplasm. The enzyme catalyses 6-carboxyhexanoyl-[ACP] methyl ester + H2O = 6-carboxyhexanoyl-[ACP] + methanol + H(+). The protein operates within cofactor biosynthesis; biotin biosynthesis. Functionally, the physiological role of BioH is to remove the methyl group introduced by BioC when the pimeloyl moiety is complete. It allows to synthesize pimeloyl-ACP via the fatty acid synthetic pathway through the hydrolysis of the ester bonds of pimeloyl-ACP esters. The protein is Pimeloyl-[acyl-carrier protein] methyl ester esterase of Shigella boydii serotype 4 (strain Sb227).